Here is a 205-residue protein sequence, read N- to C-terminus: Holliday junction branch migration complex subunit RuvA (205 aa).

The tract at residues 1–64 (MIGKLKGSIE…EDQLKLFGFV (64 aa)) is domain I. Positions 65-143 (SALEREWFNL…AFAGDASASI (79 aa)) are domain II. The interval 144-153 (GLKQELGEGV) is flexible linker. The tract at residues 153-205 (VASAPVADAVSALTNLGYSRDQAANAVAAALKNGGEGGDSAKLIRLGLKELSR) is domain III.

This sequence belongs to the RuvA family. Homotetramer. Forms an RuvA(8)-RuvB(12)-Holliday junction (HJ) complex. HJ DNA is sandwiched between 2 RuvA tetramers; dsDNA enters through RuvA and exits via RuvB. An RuvB hexamer assembles on each DNA strand where it exits the tetramer. Each RuvB hexamer is contacted by two RuvA subunits (via domain III) on 2 adjacent RuvB subunits; this complex drives branch migration. In the full resolvosome a probable DNA-RuvA(4)-RuvB(12)-RuvC(2) complex forms which resolves the HJ.

The protein resides in the cytoplasm. In terms of biological role, the RuvA-RuvB-RuvC complex processes Holliday junction (HJ) DNA during genetic recombination and DNA repair, while the RuvA-RuvB complex plays an important role in the rescue of blocked DNA replication forks via replication fork reversal (RFR). RuvA specifically binds to HJ cruciform DNA, conferring on it an open structure. The RuvB hexamer acts as an ATP-dependent pump, pulling dsDNA into and through the RuvAB complex. HJ branch migration allows RuvC to scan DNA until it finds its consensus sequence, where it cleaves and resolves the cruciform DNA. This chain is Holliday junction branch migration complex subunit RuvA, found in Agrobacterium fabrum (strain C58 / ATCC 33970) (Agrobacterium tumefaciens (strain C58)).